The sequence spans 953 residues: Glycine dehydrogenase (decarboxylating) (953 aa).

At K705 the chain carries N6-(pyridoxal phosphate)lysine.

It belongs to the GcvP family. The glycine cleavage system is composed of four proteins: P, T, L and H. It depends on pyridoxal 5'-phosphate as a cofactor.

The catalysed reaction is N(6)-[(R)-lipoyl]-L-lysyl-[glycine-cleavage complex H protein] + glycine + H(+) = N(6)-[(R)-S(8)-aminomethyldihydrolipoyl]-L-lysyl-[glycine-cleavage complex H protein] + CO2. Functionally, the glycine cleavage system catalyzes the degradation of glycine. The P protein binds the alpha-amino group of glycine through its pyridoxal phosphate cofactor; CO(2) is released and the remaining methylamine moiety is then transferred to the lipoamide cofactor of the H protein. The protein is Glycine dehydrogenase (decarboxylating) of Sodalis glossinidius (strain morsitans).